The following is a 278-amino-acid chain: Movement protein (278 aa).

The segment at 256-278 is disordered; the sequence is TLRQEGRDKGDNRRVGVGESPTN. The segment covering 259 to 271 has biased composition (basic and acidic residues); the sequence is QEGRDKGDNRRVG.

This sequence belongs to the tobamoviruses movement protein family.

This Vitis vinifera (Grape) protein is Movement protein.